Here is a 539-residue protein sequence, read N- to C-terminus: GMP synthase [glutamine-hydrolyzing] (539 aa).

The Glutamine amidotransferase type-1 domain maps to 4–202 (KILILDFGSQ…VLQIAGAKPD (199 aa)). Cys81 functions as the Nucleophile in the catalytic mechanism. Residues His176 and Glu178 contribute to the active site. Residues 203 to 395 (WIMKNHIEEA…LGLPPEMVYR (193 aa)) enclose the GMPS ATP-PPase domain. 230-236 (SGGVDSS) provides a ligand contact to ATP.

In terms of assembly, homodimer.

The enzyme catalyses XMP + L-glutamine + ATP + H2O = GMP + L-glutamate + AMP + diphosphate + 2 H(+). The protein operates within purine metabolism; GMP biosynthesis; GMP from XMP (L-Gln route): step 1/1. Catalyzes the synthesis of GMP from XMP. This chain is GMP synthase [glutamine-hydrolyzing], found in Burkholderia cenocepacia (strain ATCC BAA-245 / DSM 16553 / LMG 16656 / NCTC 13227 / J2315 / CF5610) (Burkholderia cepacia (strain J2315)).